We begin with the raw amino-acid sequence, 675 residues long: NADH-ubiquinone oxidoreductase 75 kDa subunit (675 aa).

Positions 2 to 80 (KNISFKVNDF…SMNIYTNTLK (79 aa)) constitute a 2Fe-2S ferredoxin-type domain. Residues Cys-36, Cys-47, Cys-50, and Cys-64 each coordinate [2Fe-2S] cluster. Residues 80-119 (KVKKARESVLEFLLANHPLDCPICDQGGECDLQDQSVVFG) enclose the 4Fe-4S His(Cys)3-ligated-type domain. The [4Fe-4S] cluster site is built by His-96, Cys-100, Cys-103, Cys-109, Cys-148, Cys-151, Cys-154, and Cys-198. The 4Fe-4S Mo/W bis-MGD-type domain occupies 217–273 (LKSYNSIDVLDSLHSNIRVDIRGTKIMRILPRVNSELNEDWITDKIRFSYDSFRRQR).

It belongs to the complex I 75 kDa subunit family. In terms of assembly, complex I is composed of about 30 different subunits. It depends on [2Fe-2S] cluster as a cofactor. Requires [4Fe-4S] cluster as cofactor.

It localises to the mitochondrion inner membrane. The catalysed reaction is a ubiquinone + NADH + 5 H(+)(in) = a ubiquinol + NAD(+) + 4 H(+)(out). In terms of biological role, core subunit of the mitochondrial membrane respiratory chain NADH dehydrogenase (Complex I) that is believed to belong to the minimal assembly required for catalysis. Complex I functions in the transfer of electrons from NADH to the respiratory chain. The immediate electron acceptor for the enzyme is believed to be ubiquinone. This is the largest subunit of complex I and it is a component of the iron-sulfur (IP) fragment of the enzyme. It may form part of the active site crevice where NADH is oxidized. The protein is NADH-ubiquinone oxidoreductase 75 kDa subunit (NAD11) of Acanthamoeba castellanii (Amoeba).